We begin with the raw amino-acid sequence, 526 residues long: Fatty-acid amide hydrolase 2-B (526 aa).

A helical membrane pass occupies residues 12-32; sequence CLLVLVSGLFLALFRLLSPGT. Active-site charge relay system residues include lysine 128 and serine 203. Residue serine 227 is the Acyl-ester intermediate of the active site.

This sequence belongs to the amidase family.

The protein localises to the membrane. It catalyses the reaction N-(5Z,8Z,11Z,14Z-eicosatetraenoyl)-ethanolamine + H2O = ethanolamine + (5Z,8Z,11Z,14Z)-eicosatetraenoate. It carries out the reaction (9Z)-octadecenamide + H2O = (9Z)-octadecenoate + NH4(+). This chain is Fatty-acid amide hydrolase 2-B (faah2b), found in Danio rerio (Zebrafish).